A 274-amino-acid polypeptide reads, in one-letter code: Orotidine 5'-phosphate decarboxylase (274 aa).

Lysine 95 functions as the Proton donor in the catalytic mechanism.

Belongs to the OMP decarboxylase family. Type 2 subfamily.

It catalyses the reaction orotidine 5'-phosphate + H(+) = UMP + CO2. It participates in pyrimidine metabolism; UMP biosynthesis via de novo pathway; UMP from orotate: step 2/2. This is Orotidine 5'-phosphate decarboxylase from Verminephrobacter eiseniae (strain EF01-2).